The primary structure comprises 46 residues: Short transmembrane mitochondrial protein 1 (46 aa).

Residues 7-23 (GFTLGNVVGMYLAQNYE) form a helical membrane-spanning segment.

It belongs to the STMP1 family. As to expression, widely expressed. Expressed more abundantly in brain compared with other tissues such as heart, muscle and liver.

It is found in the mitochondrion inner membrane. The protein localises to the mitochondrion outer membrane. Its subcellular location is the mitochondrion intermembrane space. Its function is as follows. Microprotein involved in mitochondrial respiratory chain complex III (ubiquinol-cytochrome c oxidoreductase) and complex IV (mitochondrial cytochrome c oxidase complex) assembly. Required for the formation of mitochondrial supercomplexes (SCs). Also required for the activation of the NLRP3 inflammasome. The sequence is that of Short transmembrane mitochondrial protein 1 from Danio rerio (Zebrafish).